The following is a 196-amino-acid chain: Mitochondrial inner membrane protein SHH3 (196 aa).

The N-terminal 53 residues, 1-53 (MKATIQRVTSVFGVPRASVFVPRISTPFILHNYISNGRMDLFSKEFHNGRVSK), are a transit peptide targeting the mitochondrion. Residues 54–97 (SDLWSSNKEEELLVSQRKKRPISPHLTVYEPEMSWYLSSLHRIS) are Mitochondrial matrix-facing. The a ubiquinone site is built by serine 91 and arginine 95. A helical membrane pass occupies residues 98 to 118 (GVLLALGFYAFTITLGVTTIM). The Mitochondrial intermembrane segment spans residues 119–137 (GMDTTFQDLNKWYHEKMPK). The chain crosses the membrane as a helical span at residues 138–160 (WSQWVAKGSAAYLFAFHFGNGIR). Histidine 154 is a binding site for heme. The Mitochondrial matrix segment spans residues 161 to 174 (HLIWDMGYELTNRG). The helical transmembrane segment at 175-195 (VIKTGSIVLAGTLVLGTYLLA) threads the bilayer. Residue glutamine 196 is a topological domain, mitochondrial intermembrane.

It belongs to the cytochrome b560 family.

It localises to the mitochondrion inner membrane. In terms of biological role, homolog of SDH3, but seems not to be a stoichiometric subunit of either the succinate dehydrogenase (SDH) complex or the mitochondrial inner membrane translocase TIM22 complex. The protein is Mitochondrial inner membrane protein SHH3 of Saccharomyces cerevisiae (strain ATCC 204508 / S288c) (Baker's yeast).